A 139-amino-acid polypeptide reads, in one-letter code: Ribulose bisphosphate carboxylase small subunit, chromosomal (139 aa).

The protein belongs to the RuBisCO small chain family. In terms of assembly, heterohexadecamer of 8 large and 8 small subunits.

Functionally, ruBisCO catalyzes two reactions: the carboxylation of D-ribulose 1,5-bisphosphate, the primary event in carbon dioxide fixation, as well as the oxidative fragmentation of the pentose substrate. Both reactions occur simultaneously and in competition at the same active site. Although the small subunit is not catalytic it is essential for maximal activity. The polypeptide is Ribulose bisphosphate carboxylase small subunit, chromosomal (Cupriavidus necator (Alcaligenes eutrophus)).